Reading from the N-terminus, the 683-residue chain is Long-chain-fatty-acid--CoA ligase 5 (683 aa).

A helical; Signal-anchor for type III membrane protein membrane pass occupies residues 12–32 (LPTPALICLLTFGTAIFLWLI). Residues 33–683 (NRPQPVLPLI…IKSLYESIEE (651 aa)) lie on the Cytoplasmic side of the membrane. Lysine 361 is subject to N6-acetyllysine.

The protein belongs to the ATP-dependent AMP-binding enzyme family. As to expression, expressed most abundantly in the small intestine, and to a much lesser extent in the lung, liver, adrenal gland, adipose tissue and kidney.

The protein resides in the mitochondrion. It is found in the endoplasmic reticulum. The protein localises to the mitochondrion outer membrane. It localises to the endoplasmic reticulum membrane. Its subcellular location is the cell membrane. The catalysed reaction is a long-chain fatty acid + ATP + CoA = a long-chain fatty acyl-CoA + AMP + diphosphate. The enzyme catalyses (5Z,8Z,11Z,14Z)-eicosatetraenoate + ATP + CoA = (5Z,8Z,11Z,14Z)-eicosatetraenoyl-CoA + AMP + diphosphate. It catalyses the reaction 15-hydroxy-(5Z,8Z,11Z,13E)-eicosatetraenoate + ATP + CoA = 15-hydroxy-(5Z,8Z,11Z,13E)-eicosatetraenoyl-CoA + AMP + diphosphate. It carries out the reaction 12-hydroxy-(5Z,8Z,10E,14Z)-eicosatetraenoate + ATP + CoA = 12-hydroxy-(5Z,8Z,10E,14Z)-eicosatetraenoyl-CoA + AMP + diphosphate. The catalysed reaction is 5-hydroxy-(6E,8Z,11Z,14Z)-eicosatetraenoate + ATP + CoA = 5-hydroxy-(6E,8Z,11Z,14Z)-eicosatetraenoyl-CoA + AMP + diphosphate. The enzyme catalyses 14,15-epoxy-(5Z,8Z,11Z)-eicosatrienoate + ATP + CoA = 14,15-epoxy-(5Z,8Z,11Z)-eicosatrienoyl-CoA + AMP + diphosphate. It catalyses the reaction 11,12-epoxy-(5Z,8Z,14Z)-eicosatrienoate + ATP + CoA = 11,12-epoxy-(5Z,8Z,14Z)-eicosatrienoyl-CoA + AMP + diphosphate. It carries out the reaction hexadecanoate + ATP + CoA = hexadecanoyl-CoA + AMP + diphosphate. The catalysed reaction is (E)-hexadec-2-enoate + ATP + CoA = (2E)-hexadecenoyl-CoA + AMP + diphosphate. The enzyme catalyses (9Z)-octadecenoate + ATP + CoA = (9Z)-octadecenoyl-CoA + AMP + diphosphate. In terms of biological role, catalyzes the conversion of long-chain fatty acids to their active form acyl-CoAs for both synthesis of cellular lipids, and degradation via beta-oxidation. ACSL5 may sensitize epithelial cells to apoptosis specifically triggered by the death ligand TRAIL at the villus tip of the crypt-villus axis of the small intestine. May have a role in the survival of glioma cells. May activate fatty acids from exogenous sources for the synthesis of triacylglycerol destined for intracellular storage. It was suggested that it may also stimulate fatty acid oxidation. Utilizes a wide range of saturated fatty acids with a preference for C16-C18 unsaturated fatty acids. This is Long-chain-fatty-acid--CoA ligase 5 from Rattus norvegicus (Rat).